The primary structure comprises 882 residues: Alanine--tRNA ligase (882 aa).

The Zn(2+) site is built by H571, H575, C673, and H677.

It belongs to the class-II aminoacyl-tRNA synthetase family. Zn(2+) is required as a cofactor.

It is found in the cytoplasm. It carries out the reaction tRNA(Ala) + L-alanine + ATP = L-alanyl-tRNA(Ala) + AMP + diphosphate. In terms of biological role, catalyzes the attachment of alanine to tRNA(Ala) in a two-step reaction: alanine is first activated by ATP to form Ala-AMP and then transferred to the acceptor end of tRNA(Ala). Also edits incorrectly charged Ser-tRNA(Ala) and Gly-tRNA(Ala) via its editing domain. This is Alanine--tRNA ligase from Stenotrophomonas maltophilia (strain K279a).